The following is a 702-amino-acid chain: MVPSTFLRSKPARCLPVLLATLIFAGCGTHTQDQSAAFMQGTSQANSSFYLQQMQQSTNDSKTNWQLLAIRALLQEGKKQQAIDLFNQLPANLNSTQAREQSLLAVEVKLAQNDYQAARNLLAKIDPTNLEQPQQARYWQAQIDASQGKPSLTLLRALIAQQPLLSDAKQRQKNIDATWQALTSMPQDQANALVINADENILQGWLDLQRMWFDNRNDPTLLKAGVKDWQTRYPQNPGAKMLPTALVNMQNYKPASINKIALFLPLNGQASIFGRTIQQGFEAAKNGAPSVTGSAVPAQVAQAANVSGNDDVVSPSQAEISDLTATGSRADPVQAPTQDQAAPAAEPAAQAPATSTTPQTTASPATQPVTAPAAQPQPVVATAANPSAELKIYDTTTQPISQLLAQAQQDGATLVVGPLLKENVEEVIKSNTPLNVLALNQPEKVESRANLCYFALSPEDEARDAARHIHQQGKQTPLLLVPRGALGDRVVSAFADEWLKLGGASVLQQRFGSTAELRAGVNGGGGIALSGTPVSTLPSAQNSILGSADEMPVSSGGSVDAAYILATPEQIAYIKPMIAMRNGSQSNVTLYASSRSAQGTAGPDFRLEMEGLQYSEIPMLAGSNPSLMQQALSAVRNDYSLARLYAMGADAWSLANHFTQMRQTPGFELNGNTGDLTANQDCVINRKLSWLKYQQGKIVPAS.

The first 26 residues, 1–26, serve as a signal peptide directing secretion; it reads MVPSTFLRSKPARCLPVLLATLIFAG. Cys-27 carries N-palmitoyl cysteine lipidation. Cys-27 carries S-diacylglycerol cysteine lipidation. Positions 327 to 378 are disordered; the sequence is GSRADPVQAPTQDQAAPAAEPAAQAPATSTTPQTTASPATQPVTAPAAQPQP. Low complexity predominate over residues 330 to 378; the sequence is ADPVQAPTQDQAAPAAEPAAQAPATSTTPQTTASPATQPVTAPAAQPQP.

It belongs to the LpoA family. Interacts with PBP1a.

It localises to the cell outer membrane. Functionally, regulator of peptidoglycan synthesis that is essential for the function of penicillin-binding protein 1A (PBP1a). This is Penicillin-binding protein activator LpoA from Klebsiella pneumoniae subsp. pneumoniae (strain ATCC 700721 / MGH 78578).